Reading from the N-terminus, the 563-residue chain is Arginine--tRNA ligase (563 aa).

A 'HIGH' region motif is present at residues 121–131 (PNIAKPFSIGH).

It belongs to the class-I aminoacyl-tRNA synthetase family. In terms of assembly, monomer.

The protein localises to the cytoplasm. It catalyses the reaction tRNA(Arg) + L-arginine + ATP = L-arginyl-tRNA(Arg) + AMP + diphosphate. The sequence is that of Arginine--tRNA ligase from Streptococcus pyogenes serotype M4 (strain MGAS10750).